A 524-amino-acid chain; its full sequence is MAENNNLKLASTMEGRVEQLAEQRQVIEAGGGERRVEKQHSQGKQTARERLNNLLDPHSFDEVGAFRKHRTTLFGMDKAVVPADGVVTGRGTILGRPVHAASQDFTVMGGSAGETQSTKVVETMEQALLTGTPFLFFYDSGGARIQEGIDSLSGYGKMFFANVKLSGVVPQIAIIAGPCAGGASYSPALTDFIIMTKKAHMFITGPQVIKSVTGEDVTADELGGAEAHMAISGNIHFVAEDDDAAELIAKKLLSFLPQNNTEEASFVNPNNDVSPNTELRDIVPIDGKKGYDVRDVIAKIVDWGDYLEVKAGYATNLVTAFARVNGRSVGIVANQPSVMSGCLDINASDKAAEFVNFCDSFNIPLVQLVDVPGFLPGVQQEYGGIIRHGAKMLYAYSEATVPKITVVLRKAYGGSYLAMCNRDLGADAVYAWPSAEIAVMGAEGAANVIFRKEIKAADDPDAMRAEKIEEYQNAFNTPYVAAARGQVDDVIDPADTRRKIASALEMYATKRQTRPAKKHGNFPC.

Residues 13-268 form the CoA carboxyltransferase N-terminal domain; sequence MEGRVEQLAE…NNTEEASFVN (256 aa). Residues 13–506 are carboxyltransferase; the sequence is MEGRVEQLAE…RRKIASALEM (494 aa). The region spanning 274 to 506 is the CoA carboxyltransferase C-terminal domain; that stretch reads SPNTELRDIV…RRKIASALEM (233 aa).

In terms of assembly, homohexamer. Transcarboxylase is composed of three subunits: 1.3S, 5S, and 12S. The core of the enzyme is composed of six 12S subunits. On each side of the core there are three pairs of 5S subunits. Each 5S dimer is attached to the core by two 1.3S subunits. Thus the total number of chains is 30 (6 + 12 + 12).

The enzyme catalyses (S)-methylmalonyl-CoA + pyruvate = propanoyl-CoA + oxaloacetate. The 12S subunit specifically catalyzes the transfer of the carboxyl group of methylmalonyl CoA to the biotin of the 1.3S subunit forming propanoyl-CoA and carboxylated 1.3S-biotin. This Propionibacterium freudenreichii subsp. shermanii protein is Methylmalonyl-CoA carboxyltransferase 12S subunit.